We begin with the raw amino-acid sequence, 257 residues long: Imidazole glycerol phosphate synthase subunit HisF (257 aa).

Active-site residues include aspartate 12 and aspartate 131.

Belongs to the HisA/HisF family. In terms of assembly, heterodimer of HisH and HisF.

It is found in the cytoplasm. The catalysed reaction is 5-[(5-phospho-1-deoxy-D-ribulos-1-ylimino)methylamino]-1-(5-phospho-beta-D-ribosyl)imidazole-4-carboxamide + L-glutamine = D-erythro-1-(imidazol-4-yl)glycerol 3-phosphate + 5-amino-1-(5-phospho-beta-D-ribosyl)imidazole-4-carboxamide + L-glutamate + H(+). The protein operates within amino-acid biosynthesis; L-histidine biosynthesis; L-histidine from 5-phospho-alpha-D-ribose 1-diphosphate: step 5/9. Functionally, IGPS catalyzes the conversion of PRFAR and glutamine to IGP, AICAR and glutamate. The HisF subunit catalyzes the cyclization activity that produces IGP and AICAR from PRFAR using the ammonia provided by the HisH subunit. This Rhodococcus jostii (strain RHA1) protein is Imidazole glycerol phosphate synthase subunit HisF.